We begin with the raw amino-acid sequence, 256 residues long: MSSSKHSSVFNYSALFLSLFLQQMDQNSLHHLDSPKIENEYEPDSLYDMLDKLPPLDSLLDMEDLKPNAGLHFQFHYNSFEDFFENIEVDNTIPSDIHLLTQEPYFSSDSSSSSPLAIQNDGLISNVKVEKVTVKKKRNLKKKRQDKLEMSEIKQFFDRPIMKAAKELNVGLTVLKKRCRELGIYRWPHRKLKSLNSLIKNLKNVGMEEEVKNLEEHRFLIEQEPDAELSDGTKKLRQACFKANYKRRKSLGDDYY.

In terms of domain architecture, RWP-RK spans 130–216 (EKVTVKKKRN…MEEEVKNLEE (87 aa)). Positions 190 to 224 (RKLKSLNSLIKNLKNVGMEEEVKNLEEHRFLIEQE) form a coiled coil.

The protein resides in the nucleus. Functionally, putative transcription factor. This is Protein RKD4 (RKD4) from Arabidopsis thaliana (Mouse-ear cress).